The following is a 586-amino-acid chain: Proline--tRNA ligase (586 aa).

The protein belongs to the class-II aminoacyl-tRNA synthetase family. ProS type 1 subfamily. As to quaternary structure, homodimer.

It is found in the cytoplasm. The catalysed reaction is tRNA(Pro) + L-proline + ATP = L-prolyl-tRNA(Pro) + AMP + diphosphate. In terms of biological role, catalyzes the attachment of proline to tRNA(Pro) in a two-step reaction: proline is first activated by ATP to form Pro-AMP and then transferred to the acceptor end of tRNA(Pro). As ProRS can inadvertently accommodate and process non-cognate amino acids such as alanine and cysteine, to avoid such errors it has two additional distinct editing activities against alanine. One activity is designated as 'pretransfer' editing and involves the tRNA(Pro)-independent hydrolysis of activated Ala-AMP. The other activity is designated 'posttransfer' editing and involves deacylation of mischarged Ala-tRNA(Pro). The misacylated Cys-tRNA(Pro) is not edited by ProRS. The polypeptide is Proline--tRNA ligase (Leptospira biflexa serovar Patoc (strain Patoc 1 / Ames)).